The primary structure comprises 148 residues: Flavodoxin (148 aa).

Positions 4–145 (VLILFGSSTG…AVSAFAEDVL (142 aa)) constitute a Flavodoxin-like domain.

The protein belongs to the flavodoxin family. FMN is required as a cofactor.

Low-potential electron donor to a number of redox enzymes. This chain is Flavodoxin, found in Desulfovibrio desulfuricans (strain ATCC 27774 / DSM 6949 / MB).